We begin with the raw amino-acid sequence, 1077 residues long: Teashirt homolog 1 (1077 aa).

Disordered regions lie at residues 1 to 109, 139 to 195, and 269 to 298; these read MPRR…VSYP, SGST…SSSS, and GHYRDDNRDKDSEKTKRWSKPRKRSLMEME. Residues 26–36 are compositionally biased toward acidic residues; sequence IDEEHVEDDGL. Composition is skewed to polar residues over residues 57–71 and 139–152; these read QSYQNSPVSSATNQD and SGSTTSTNDASQKE. Low complexity predominate over residues 164–195; the sequence is PVSTTGPTTSTPSTSCSSSTSHSSTTSTSSSS. 2 consecutive C2H2-type zinc fingers follow at residues 246–270 and 307–331; these read FRCKDCSAAYDTLVELTVHMNETGH and LKCMYCGHSFESLQDLSVHMIKTKH. A compositionally biased stretch (basic and acidic residues) spans 269-284; it reads GHYRDDNRDKDSEKTK. The C2H2-type 3; atypical zinc finger occupies 416 to 440; the sequence is LKCMECGSSHDTLQQLTAHMMVTGH. Disordered stretches follow at residues 467–549 and 647–720; these read SIPL…KGGL and TGKV…EPLK. 3 stretches are compositionally biased toward basic and acidic residues: residues 496-528, 647-665, and 675-708; these read SEEKKEPEKEKPPVAGDAEKIKEESEDSLEKFE, TGKVNIKKEERPPEKEKSS, and KENKDFPKTEEVSGKPQKKGPEAETGKAKKEGPL. At Ser-765 the chain carries Phosphoserine. A disordered region spans residues 848-873; that stretch reads TGRLTPKSSTPSTVSEKSDADGSSFE. The segment covering 853–862 has biased composition (polar residues); that stretch reads PKSSTPSTVS. The homeobox; atypical DNA-binding region spans 885–955; sequence RKGRQSNWNP…NVKYQLRRTG (71 aa). 2 consecutive C2H2-type zinc fingers follow at residues 970–992 and 1037–1060; these read FFCNDCASQFRTASTYISHLETH and FQCKLCNRTFASKHAVKLHLSKTH.

Belongs to the teashirt C2H2-type zinc-finger protein family. In terms of assembly, interacts (via homeobox domain) with APBB1 (via PID domain 1). Expressed in brain; strongly reduced in post-mortem elderly subjects with Alzheimer disease.

It localises to the nucleus. Probable transcriptional regulator involved in developmental processes. May act as a transcriptional repressor (Potential). This Homo sapiens (Human) protein is Teashirt homolog 1 (TSHZ1).